A 202-amino-acid chain; its full sequence is Adenosylcobalamin/alpha-ribazole phosphatase (202 aa).

Catalysis depends on histidine 8, which acts as the Tele-phosphohistidine intermediate. The active-site Proton donor/acceptor is glutamate 81.

It belongs to the phosphoglycerate mutase family. Monomer.

The catalysed reaction is adenosylcob(III)alamin 5'-phosphate + H2O = adenosylcob(III)alamin + phosphate. It carries out the reaction alpha-ribazole 5'-phosphate + H2O = alpha-ribazole + phosphate. It functions in the pathway nucleoside biosynthesis; alpha-ribazole biosynthesis; alpha-ribazole from 5,6-dimethylbenzimidazole: step 2/2. In terms of biological role, catalyzes the conversion of adenosylcobalamin 5'-phosphate to adenosylcobalamin (vitamin B12); involved in the assembly of the nucleotide loop of cobalamin. Also catalyzes the hydrolysis of the phospho group from alpha-ribazole 5'-phosphate to form alpha-ribazole. In Salmonella typhimurium (strain LT2 / SGSC1412 / ATCC 700720), this protein is Adenosylcobalamin/alpha-ribazole phosphatase (cobC).